We begin with the raw amino-acid sequence, 776 residues long: Bifunctional lysine-specific demethylase and histidyl-hydroxylase NO66 (776 aa).

Disordered stretches follow at residues 1-57 (MGKK…EPKF), 87-126 (EQNG…AHKH), and 165-288 (ILDE…DDEG). Composition is skewed to basic and acidic residues over residues 47–57 (HYKEPSKEPKF) and 98–119 (EISP…DGVA). Positions 166-204 (LDEEVEDEEIDEEEFEDEEEVEDEEGMDEDETEIDESEM) are enriched in acidic residues. The span at 206–216 (VDPKDIERCIE) shows a compositional bias: basic and acidic residues. Residues 217-288 (FEDVDDEDEM…EMDADSDDEG (72 aa)) are compositionally biased toward acidic residues. Residues 425–569 (QLVNPQTFDD…NLMEKVIPEA (145 aa)) enclose the JmjC domain. Residues His468, Asp470, and His535 each coordinate Fe cation.

The protein belongs to the ROX family. NO66 subfamily. The cofactor is Fe(2+).

Its subcellular location is the nucleus. The enzyme catalyses N(6),N(6)-dimethyl-L-lysyl(36)-[histone H3] + 2 2-oxoglutarate + 2 O2 = L-lysyl(36)-[histone H3] + 2 formaldehyde + 2 succinate + 2 CO2. Oxygenase that can act as both a histone lysine demethylase and a ribosomal histidine hydroxylase. Specifically demethylates 'Lys-4' (H3K4me) and 'Lys-36' (H3K36me) of histone H3, thereby playing a central role in histone code. This chain is Bifunctional lysine-specific demethylase and histidyl-hydroxylase NO66 (jmjc-1), found in Caenorhabditis briggsae.